A 222-amino-acid chain; its full sequence is Pyrrolidone-carboxylate peptidase (222 aa).

Active-site residues include E80, C146, and H170.

The protein belongs to the peptidase C15 family. As to quaternary structure, homotetramer.

Its subcellular location is the cytoplasm. It carries out the reaction Release of an N-terminal pyroglutamyl group from a polypeptide, the second amino acid generally not being Pro.. Functionally, removes 5-oxoproline from various penultimate amino acid residues except L-proline. The protein is Pyrrolidone-carboxylate peptidase of Mycobacterium marinum (strain ATCC BAA-535 / M).